We begin with the raw amino-acid sequence, 263 residues long: Mediator of RNA polymerase II transcription subunit 7 (263 aa).

The span at 1 to 10 (MADAAQQRTL) shows a compositional bias: polar residues. Disordered stretches follow at residues 1-57 (MADA…PAEL), 101-122 (ITQL…SEPS), and 222-247 (GIAA…QKTI). Residues 24–47 (FTPDNLKRLEEIKKEASKGEDGKP) are compositionally biased toward basic and acidic residues. Over residues 101 to 111 (ITQLYPSSSPA) the composition is skewed to polar residues. A compositionally biased stretch (basic and acidic residues) spans 234-247 (EDGRKESETSQKTI).

Belongs to the Mediator complex subunit 7 family. Component of the Mediator complex.

It localises to the nucleus. Functionally, component of the Mediator complex, a coactivator involved in the regulated transcription of nearly all RNA polymerase II-dependent genes. Mediator functions as a bridge to convey information from gene-specific regulatory proteins to the basal RNA polymerase II transcription machinery. Mediator is recruited to promoters by direct interactions with regulatory proteins and serves as a scaffold for the assembly of a functional preinitiation complex with RNA polymerase II and the general transcription factors. The sequence is that of Mediator of RNA polymerase II transcription subunit 7 (med7) from Aspergillus niger (strain ATCC MYA-4892 / CBS 513.88 / FGSC A1513).